A 108-amino-acid polypeptide reads, in one-letter code: Peptidyl-prolyl cis-trans isomerase FKBP1B (108 aa).

The region spanning 20–108 is the PPIase FKBP-type domain; it reads GQTCVVHYTG…IFGVELLNLE (89 aa).

The protein belongs to the FKBP-type PPIase family. FKBP1 subfamily. In terms of assembly, identified in a complex composed of RYR2, FKBP1B, PKA catalytic subunit, PRKAR2A, AKAP6, and the protein phosphatases PP2A and PP1. Interacts directly with RYR2.

Its subcellular location is the cytoplasm. It localises to the sarcoplasmic reticulum. The catalysed reaction is [protein]-peptidylproline (omega=180) = [protein]-peptidylproline (omega=0). Its activity is regulated as follows. Inhibited by both FK506 and rapamycin. Has the potential to contribute to the immunosuppressive and toxic effects of FK506 and rapamycin. PPIases accelerate the folding of proteins. It catalyzes the cis-trans isomerization of proline imidic peptide bonds in oligopeptides. The protein is Peptidyl-prolyl cis-trans isomerase FKBP1B (FKBP1B) of Oryctolagus cuniculus (Rabbit).